The primary structure comprises 230 residues: Small ribosomal subunit protein uS7B (230 aa).

Positions 1–22 (MSEEVVESSSQEASQVIPQEQE) are disordered. Over residues 7–16 (ESSSQEASQV) the composition is skewed to low complexity.

This sequence belongs to the universal ribosomal protein uS7 family.

The protein is Small ribosomal subunit protein uS7B (RpS5b) of Drosophila melanogaster (Fruit fly).